Here is a 30-residue protein sequence, read N- to C-terminus: LSSGATALSGVPRLTKPAGRLTTTTVAVAF.

In terms of tissue distribution, expressed by the venom gland.

It is found in the secreted. The protein is Conopeptide Vi002 of Conus virgo (Virgin cone).